Consider the following 398-residue polypeptide: Membrane-spanning 4-domains subfamily A member 18 (398 aa).

Transmembrane regions (helical) follow at residues 156-176 (LGAIQILIGLTHIFSAINPVL), 178-198 (YYPFVTWLSGYPLWGGLSYIV), 218-238 (SISFNIISALFAFAGIFIIIT), and 251-271 (AVSGGLLPFALLEFILTCVVS). The tract at residues 316 to 346 (TGPVSATNGPVNTTIHPVNTTTSPVNTTTSP) is disordered. Residues 319 to 331 (VSATNGPVNTTIH) show a composition bias toward polar residues. The segment covering 332-346 (PVNTTTSPVNTTTSP) has biased composition (low complexity).

The protein belongs to the MS4A family.

The protein localises to the membrane. The protein is Membrane-spanning 4-domains subfamily A member 18 (MS4A18) of Homo sapiens (Human).